The sequence spans 454 residues: Glutamyl-tRNA reductase (454 aa).

Residues 49–52 (TCNR), Ser-109, 114–116 (ETQ), and Gln-120 contribute to the substrate site. The Nucleophile role is filled by Cys-50. Position 189–194 (189–194 (GAGKMS)) interacts with NADP(+). The segment at 434-454 (NDKNKQTSSSREQVLVSRFPD) is disordered.

Belongs to the glutamyl-tRNA reductase family. As to quaternary structure, homodimer.

The catalysed reaction is (S)-4-amino-5-oxopentanoate + tRNA(Glu) + NADP(+) = L-glutamyl-tRNA(Glu) + NADPH + H(+). It functions in the pathway porphyrin-containing compound metabolism; protoporphyrin-IX biosynthesis; 5-aminolevulinate from L-glutamyl-tRNA(Glu): step 1/2. In terms of biological role, catalyzes the NADPH-dependent reduction of glutamyl-tRNA(Glu) to glutamate 1-semialdehyde (GSA). This chain is Glutamyl-tRNA reductase, found in Brevibacillus brevis (strain 47 / JCM 6285 / NBRC 100599).